The sequence spans 557 residues: 2-succinyl-5-enolpyruvyl-6-hydroxy-3-cyclohexene-1-carboxylate synthase (557 aa).

Residues 183–206 (YGGTEHPPVAPPLPPRRAPRAAAP) are disordered.

Belongs to the TPP enzyme family. MenD subfamily. In terms of assembly, homodimer. It depends on Mg(2+) as a cofactor. The cofactor is Mn(2+). Requires thiamine diphosphate as cofactor.

The enzyme catalyses isochorismate + 2-oxoglutarate + H(+) = 5-enolpyruvoyl-6-hydroxy-2-succinyl-cyclohex-3-ene-1-carboxylate + CO2. It functions in the pathway quinol/quinone metabolism; 1,4-dihydroxy-2-naphthoate biosynthesis; 1,4-dihydroxy-2-naphthoate from chorismate: step 2/7. The protein operates within quinol/quinone metabolism; menaquinone biosynthesis. Catalyzes the thiamine diphosphate-dependent decarboxylation of 2-oxoglutarate and the subsequent addition of the resulting succinic semialdehyde-thiamine pyrophosphate anion to isochorismate to yield 2-succinyl-5-enolpyruvyl-6-hydroxy-3-cyclohexene-1-carboxylate (SEPHCHC). This is 2-succinyl-5-enolpyruvyl-6-hydroxy-3-cyclohexene-1-carboxylate synthase from Halorhodospira halophila (strain DSM 244 / SL1) (Ectothiorhodospira halophila (strain DSM 244 / SL1)).